A 548-amino-acid chain; its full sequence is Zinc metalloproteinase (548 aa).

An N-terminal signal peptide occupies residues 1-28; sequence MKKYYAVTGIALAVGMLCTTQLAGATQA. His362 serves as a coordination point for Zn(2+). Residue Glu363 is part of the active site. The Zn(2+) site is built by His366 and Glu386. Residues 440–459 are disordered; the sequence is SNWKPTATNPNDNNDQGGVH. The segment covering 442–459 has biased composition (polar residues); sequence WKPTATNPNDNNDQGGVH. The Proton donor role is filled by His459.

Belongs to the peptidase M4 family. Ca(2+) serves as cofactor. Zn(2+) is required as a cofactor.

It localises to the secreted. It is found in the cell wall. Zinc metalloprotease with hemolytic properties. The polypeptide is Zinc metalloproteinase (hly) (Renibacterium salmoninarum).